Here is a 262-residue protein sequence, read N- to C-terminus: 3-methyl-2-oxobutanoate hydroxymethyltransferase (262 aa).

Mg(2+) contacts are provided by D43 and D82. Residues 43–44 (DS), D82, and K111 each bind 3-methyl-2-oxobutanoate. E113 is a Mg(2+) binding site. Residue E180 is the Proton acceptor of the active site.

It belongs to the PanB family. In terms of assembly, homodecamer; pentamer of dimers. Requires Mg(2+) as cofactor.

It is found in the cytoplasm. The enzyme catalyses 3-methyl-2-oxobutanoate + (6R)-5,10-methylene-5,6,7,8-tetrahydrofolate + H2O = 2-dehydropantoate + (6S)-5,6,7,8-tetrahydrofolate. It functions in the pathway cofactor biosynthesis; (R)-pantothenate biosynthesis; (R)-pantoate from 3-methyl-2-oxobutanoate: step 1/2. Its function is as follows. Catalyzes the reversible reaction in which hydroxymethyl group from 5,10-methylenetetrahydrofolate is transferred onto alpha-ketoisovalerate to form ketopantoate. This chain is 3-methyl-2-oxobutanoate hydroxymethyltransferase, found in Wolinella succinogenes (strain ATCC 29543 / DSM 1740 / CCUG 13145 / JCM 31913 / LMG 7466 / NCTC 11488 / FDC 602W) (Vibrio succinogenes).